The primary structure comprises 604 residues: MPDAHFDGKAFVLTLPAQPGVYRMLNAAGDVIYVGKAIDLRKRVSSYFQKSGLSPRIQLMVSQIAGIETTVTRSEAEALLLENNLIKSLAPRYNILFRDDKSYPYLLLTRHIFPRLAFYRGALDDRHQYFGPFPNAGVVKSSIQLLQKVFRLRTCENSVFDHRTRPCLLYQIKRCSGPCVGLITPEAYQQDVKSAAMFLQGKQDEVLKTIEQKMFTASDQQDYEQAAQLRDQMQALRKIQEKQFVDSGKALDADVIACAIEPDSHAVAVNLVMIRSGRHLGDKTFFPQNVYEADISTVLEAFVTQHYLNRSVPPLIILGQKIRVTLLQKLLSDQAGHKITLTTNPIGERRKWLDMAAENAQLALQQMLIQQASQEDRLQALQEALNLPGLARIECFDISHTMGEATIASCVVYDRFAMRNGEYRRYNITGIVPGDDYAAMRDVLQRRYAKLAMEEGKLPDLILIDGGKGQIRVASEVMIELGLNDIPLVGVAKGETRKPGLEQLILPWQEEALHLPDDHPALHLIQQIRDEAHRFAIQGHRAKRAKTRKISTLEQISGIGTKRRQSLLTRFGGLKGVKNASIEELQQTEGISRSLAEKIYRELR.

One can recognise a GIY-YIG domain in the interval 17–95; it reads AQPGVYRMLN…IKSLAPRYNI (79 aa). In terms of domain architecture, UVR spans 204 to 239; it reads DEVLKTIEQKMFTASDQQDYEQAAQLRDQMQALRKI.

Belongs to the UvrC family. As to quaternary structure, interacts with UvrB in an incision complex.

The protein localises to the cytoplasm. Its function is as follows. The UvrABC repair system catalyzes the recognition and processing of DNA lesions. UvrC both incises the 5' and 3' sides of the lesion. The N-terminal half is responsible for the 3' incision and the C-terminal half is responsible for the 5' incision. This Nitrosomonas europaea (strain ATCC 19718 / CIP 103999 / KCTC 2705 / NBRC 14298) protein is UvrABC system protein C.